The chain runs to 187 residues: Elongation factor P (187 aa).

It belongs to the elongation factor P family.

It localises to the cytoplasm. The protein operates within protein biosynthesis; polypeptide chain elongation. In terms of biological role, involved in peptide bond synthesis. Stimulates efficient translation and peptide-bond synthesis on native or reconstituted 70S ribosomes in vitro. Probably functions indirectly by altering the affinity of the ribosome for aminoacyl-tRNA, thus increasing their reactivity as acceptors for peptidyl transferase. This Zymomonas mobilis subsp. mobilis (strain ATCC 31821 / ZM4 / CP4) protein is Elongation factor P.